We begin with the raw amino-acid sequence, 237 residues long: Demethylmenaquinone methyltransferase (237 aa).

S-adenosyl-L-methionine is bound by residues threonine 58, aspartate 79, and 106–107 (NA).

Belongs to the class I-like SAM-binding methyltransferase superfamily. MenG/UbiE family.

It carries out the reaction a 2-demethylmenaquinol + S-adenosyl-L-methionine = a menaquinol + S-adenosyl-L-homocysteine + H(+). It functions in the pathway quinol/quinone metabolism; menaquinone biosynthesis; menaquinol from 1,4-dihydroxy-2-naphthoate: step 2/2. Methyltransferase required for the conversion of demethylmenaquinol (DMKH2) to menaquinol (MKH2). The protein is Demethylmenaquinone methyltransferase of Bacillus mycoides (strain KBAB4) (Bacillus weihenstephanensis).